Reading from the N-terminus, the 295-residue chain is MNIGRIVTAMVTPFNEQDQVNLEATCQLVNELIANGSDALVVGGTTGESPTLTTDEKMALFHTVVEAAGGRVPVIAGTGSNNTRASIELSKKVEDLGVDGIMLVTPYYNKPSQEGLFQHFKAISESTSLPIMLYNIPGRSGVNLDAETTLRLAELRNIVSIKEASGNLDQIAEIIEHSPADFSVYSGDDSLTLPLLSIGGTGVVSVASHIIGNEMQEMVQLFLSGQVERAAAIHRKLLPLMKTLFMTPNPTAVKAALELKGLPVGHVRLPLVPLTAEEQRQLELAINPQFNMFVS.

Thr46 provides a ligand contact to pyruvate. Tyr134 functions as the Proton donor/acceptor in the catalytic mechanism. Lys162 serves as the catalytic Schiff-base intermediate with substrate. Val204 lines the pyruvate pocket.

It belongs to the DapA family. As to quaternary structure, homotetramer; dimer of dimers.

Its subcellular location is the cytoplasm. The enzyme catalyses L-aspartate 4-semialdehyde + pyruvate = (2S,4S)-4-hydroxy-2,3,4,5-tetrahydrodipicolinate + H2O + H(+). Its pathway is amino-acid biosynthesis; L-lysine biosynthesis via DAP pathway; (S)-tetrahydrodipicolinate from L-aspartate: step 3/4. Functionally, catalyzes the condensation of (S)-aspartate-beta-semialdehyde [(S)-ASA] and pyruvate to 4-hydroxy-tetrahydrodipicolinate (HTPA). The protein is 4-hydroxy-tetrahydrodipicolinate synthase 1 of Halalkalibacterium halodurans (strain ATCC BAA-125 / DSM 18197 / FERM 7344 / JCM 9153 / C-125) (Bacillus halodurans).